Here is a 1093-residue protein sequence, read N- to C-terminus: Probable phosphorylase b kinase regulatory subunit beta (1093 aa).

Residues methionine 1 to histidine 27 are disordered. Calmodulin-binding regions lie at residues lysine 6–histidine 27, glutamine 751–serine 778, and glutamate 905–arginine 936. Cysteine 1090 is lipidated: S-farnesyl cysteine.

The protein belongs to the phosphorylase b kinase regulatory chain family. Although the final Cys may be farnesylated, the terminal tripeptide is probably not removed, and the C-terminus is not methylated.

The protein resides in the cell membrane. It functions in the pathway glycan biosynthesis; glycogen metabolism. Its function is as follows. Phosphorylase b kinase catalyzes the phosphorylation of serine in certain substrates, including troponin I. The beta chain acts as a regulatory unit and modulates the activity of the holoenzyme in response to phosphorylation. This chain is Probable phosphorylase b kinase regulatory subunit beta, found in Drosophila melanogaster (Fruit fly).